The following is a 115-amino-acid chain: Nitrogenase-stabilizing/protective protein NifW (115 aa).

The protein belongs to the NifW family. In terms of assembly, homotrimer; associates with NifD.

Functionally, may protect the nitrogenase Fe-Mo protein from oxidative damage. The chain is Nitrogenase-stabilizing/protective protein NifW from Azotobacter vinelandii (strain DJ / ATCC BAA-1303).